The primary structure comprises 247 residues: Tyrosine recombinase XerD-like (247 aa).

The 72-residue stretch at Met1–Tyr72 folds into the Core-binding (CB) domain. Residues Ser91–Leu247 form the Tyr recombinase domain. Residue Arg212 is part of the active site. Catalysis depends on Tyr244, which acts as the O-(3'-phospho-DNA)-tyrosine intermediate.

The protein belongs to the 'phage' integrase family. XerD-like subfamily.

Its subcellular location is the cytoplasm. Putative tyrosine recombinase. Not involved in the cutting and rejoining of the recombining DNA molecules on dif(SL) site. The sequence is that of Tyrosine recombinase XerD-like from Streptococcus uberis (strain ATCC BAA-854 / 0140J).